We begin with the raw amino-acid sequence, 517 residues long: Protein disulfide-isomerase EUG1 (517 aa).

The signal sequence occupies residues 1–29 (MQVTTRFISAIVSFCLFASFTLAENSARA). Positions 30–141 (TPGSDLLVLT…ITQYMIQLYE (112 aa)) constitute a Thioredoxin 1 domain. N-linked (GlcNAc...) asparagine glycans are attached at residues Asn-159, Asn-174, Asn-207, Asn-293, and Asn-462. The Thioredoxin 2 domain maps to 355-487 (YREGTAKPIV…VFEFIKESGT (133 aa)). The Prevents secretion from ER motif lies at 514–517 (HDEL).

It belongs to the protein disulfide isomerase family. As to quaternary structure, interacts with EPS1. In terms of processing, may have O-linked mannose residues.

The protein localises to the endoplasmic reticulum lumen. It carries out the reaction Catalyzes the rearrangement of -S-S- bonds in proteins.. Functionally, probably interacts with nascent polypeptides in the endoplasmic reticulum. It is an essential gene only in the absence of PDI. Its native disulfide isomerase activity is very low. This is Protein disulfide-isomerase EUG1 (EUG1) from Saccharomyces cerevisiae (strain ATCC 204508 / S288c) (Baker's yeast).